The following is a 268-amino-acid chain: uncharacterized protein (268 aa).

Positions 45–64 are disordered; it reads SDTQGPAPGINGQGKPSPGA.

This is an uncharacterized protein from Aquifex aeolicus (strain VF5).